We begin with the raw amino-acid sequence, 358 residues long: Myb family transcription factor APL (358 aa).

The 61-residue stretch at 31–91 folds into the HTH myb-type domain; the sequence is TDPKPRLRWT…HLQKFRLGKQ (61 aa). The H-T-H motif DNA-binding region spans 62–87; the sequence is PKTIMRVMGVKGLTLYHLKSHLQKFR. Residues 125 to 145 adopt a coiled-coil conformation; it reads RNMNEMQMEVQRRLHEQLEVQ. The LHEQLE signature appears at 138–143; that stretch reads LHEQLE. The tract at residues 313–358 is disordered; sequence RKSGLSGDEGNNGGKLLERPSPRRSPLSPMMNPNGGLIQGRNSPFG.

The protein belongs to the MYB-CC family. In terms of tissue distribution, expressed in shoots and roots, specifically in the developing protophloem sieve elements. Detected in phloem and/or cambium. Expressed in the phloem tissues of various organs, including leaves and cotyledons, during vegetative growth.

The protein localises to the nucleus. Its function is as follows. Transcription factor required for phloem identity. Has a dual role both in promoting phloem differentiation and in repressing xylem differentiation during vascular development. Regulates the expression of the transcription factor NAC045 (AC A4VCM0). May activate the transcription of specific genes involved in phosphate uptake or assimilation. Promotes flowering through transcriptional activation of both FT and its transport machinery component, FTIP1. This Arabidopsis thaliana (Mouse-ear cress) protein is Myb family transcription factor APL.